Consider the following 179-residue polypeptide: Large ribosomal subunit protein uL5 (179 aa).

Belongs to the universal ribosomal protein uL5 family. In terms of assembly, part of the 50S ribosomal subunit; part of the 5S rRNA/L5/L18/L25 subcomplex. Contacts the 5S rRNA and the P site tRNA. Forms a bridge to the 30S subunit in the 70S ribosome.

Its function is as follows. This is one of the proteins that bind and probably mediate the attachment of the 5S RNA into the large ribosomal subunit, where it forms part of the central protuberance. In the 70S ribosome it contacts protein S13 of the 30S subunit (bridge B1b), connecting the 2 subunits; this bridge is implicated in subunit movement. Contacts the P site tRNA; the 5S rRNA and some of its associated proteins might help stabilize positioning of ribosome-bound tRNAs. This chain is Large ribosomal subunit protein uL5, found in Trichlorobacter lovleyi (strain ATCC BAA-1151 / DSM 17278 / SZ) (Geobacter lovleyi).